Consider the following 129-residue polypeptide: Lysozyme C (129 aa).

One can recognise a C-type lysozyme domain in the interval 1–129 (KVFGRCELAA…VRVWIKGCRL (129 aa)). Cystine bridges form between Cys6/Cys127, Cys30/Cys115, Cys64/Cys80, and Cys76/Cys94. Active-site residues include Glu35 and Asp52.

The protein belongs to the glycosyl hydrolase 22 family. As to quaternary structure, monomer.

The protein resides in the secreted. It catalyses the reaction Hydrolysis of (1-&gt;4)-beta-linkages between N-acetylmuramic acid and N-acetyl-D-glucosamine residues in a peptidoglycan and between N-acetyl-D-glucosamine residues in chitodextrins.. In terms of biological role, lysozymes have primarily a bacteriolytic function; those in tissues and body fluids are associated with the monocyte-macrophage system and enhance the activity of immunoagents. The chain is Lysozyme C (LYZ) from Numida meleagris (Helmeted guineafowl).